A 74-amino-acid polypeptide reads, in one-letter code: UPF0346 protein RBAM_019500 (74 aa).

Belongs to the UPF0346 family.

In Bacillus velezensis (strain DSM 23117 / BGSC 10A6 / LMG 26770 / FZB42) (Bacillus amyloliquefaciens subsp. plantarum), this protein is UPF0346 protein RBAM_019500.